The primary structure comprises 291 residues: MAENRYELNKNLAQMLKGGVIMDVQNPEQARIAEAAGAAAVMALERIPADIRAVGGVSRMSDPKMIKEIQGAVSIPVMAKVRIGHFVEAQILEAIEIDYIDESEVLSPADNRFHVDKKEFQVPFVCGAKDLGEALRRIAEGASMIRTKGEPGTGDIVQAVRHMRMMSQEIRRIQNLREDELYVAAKDLQVPVELVQYVHKNGKLPVVNFAAGGIATPADAALMMQLGAEGVFVGSGIFKSGDPIKRASAIVKAVTNYQNPQILAKISEDLGEAMVGINENEIQILMAERGK.

D23 provides a ligand contact to D-ribose 5-phosphate. Catalysis depends on K80, which acts as the Schiff-base intermediate with D-ribose 5-phosphate. G152 is a binding site for D-ribose 5-phosphate. R164 is a binding site for D-glyceraldehyde 3-phosphate. Residues G213 and 234-235 (GS) each bind D-ribose 5-phosphate.

It belongs to the PdxS/SNZ family. In terms of assembly, in the presence of PdxT, forms a dodecamer of heterodimers.

It carries out the reaction aldehydo-D-ribose 5-phosphate + D-glyceraldehyde 3-phosphate + L-glutamine = pyridoxal 5'-phosphate + L-glutamate + phosphate + 3 H2O + H(+). It functions in the pathway cofactor biosynthesis; pyridoxal 5'-phosphate biosynthesis. Catalyzes the formation of pyridoxal 5'-phosphate from ribose 5-phosphate (RBP), glyceraldehyde 3-phosphate (G3P) and ammonia. The ammonia is provided by the PdxT subunit. Can also use ribulose 5-phosphate and dihydroxyacetone phosphate as substrates, resulting from enzyme-catalyzed isomerization of RBP and G3P, respectively. The protein is Pyridoxal 5'-phosphate synthase subunit PdxS of Haemophilus influenzae (strain PittGG).